We begin with the raw amino-acid sequence, 258 residues long: Phosphate import ATP-binding protein PstB (258 aa).

Residues 12–253 (LEVKNLNFYY…PARKETEDYI (242 aa)) form the ABC transporter domain. An ATP-binding site is contributed by 44 to 51 (GPSGCGKS).

It belongs to the ABC transporter superfamily. Phosphate importer (TC 3.A.1.7) family. The complex is composed of two ATP-binding proteins (PstB), two transmembrane proteins (PstC and PstA) and a solute-binding protein (PstS).

The protein resides in the cell inner membrane. The enzyme catalyses phosphate(out) + ATP + H2O = ADP + 2 phosphate(in) + H(+). Part of the ABC transporter complex PstSACB involved in phosphate import. Responsible for energy coupling to the transport system. This Bordetella parapertussis (strain 12822 / ATCC BAA-587 / NCTC 13253) protein is Phosphate import ATP-binding protein PstB.